The primary structure comprises 574 residues: Iron hydrogenase 1 (574 aa).

One can recognise a 2Fe-2S ferredoxin-type domain in the interval 1-78 (MKTIIINGVQ…GMIINTNSDA (78 aa)). Positions 34, 46, 49, and 62 each coordinate [2Fe-2S] cluster. The region spanning 78–117 (AVNEKIKSRISQLLDIHEFKCGPCNRRENCEFLKLVIKYK) is the 4Fe-4S His(Cys)3-ligated-type domain. The [4Fe-4S] cluster site is built by histidine 94, cysteine 98, cysteine 101, cysteine 107, cysteine 147, cysteine 150, cysteine 153, cysteine 157, cysteine 190, cysteine 193, cysteine 196, cysteine 200, cysteine 300, cysteine 355, cysteine 499, and cysteine 503. 4Fe-4S ferredoxin-type domains follow at residues 138-167 (KSLT…YAMK) and 181-210 (DEKC…EKSH). Cysteine 503 contacts Fe(2+).

In terms of assembly, monomer. Requires [2Fe-2S] cluster as cofactor. [4Fe-4S] cluster is required as a cofactor. The cofactor is Fe(2+).

The enzyme catalyses H2 + 2 oxidized [2Fe-2S]-[ferredoxin] = 2 reduced [2Fe-2S]-[ferredoxin] + 2 H(+). This chain is Iron hydrogenase 1, found in Clostridium pasteurianum.